The chain runs to 818 residues: Nibrin (818 aa).

The FHA domain maps to 22–70 (YVVGRKNCEILLTNDQSISRVHAVLTVTEQAVTLKDSSKYGTFVNGEKL). BRCT domains lie at 91 to 168 (SKFS…SALS) and 211 to 301 (GKTF…LAAI). 3 disordered regions span residues 372 to 716 (AVGE…DLPR), 729 to 757 (NNSSRSRPGPLQTHNPNDKNVKRFRKKNV), and 793 to 818 (EEKLNEREETLGDDLFRYNPRPAKKR). Over residues 379–405 (KTNPTQKASTTNKPLSLGQEPSSTRIV) the composition is skewed to polar residues. Residues 409–419 (VMSSESFSVVE) show a composition bias toward low complexity. Polar residues predominate over residues 444-469 (APSSGNTTLKHSPQKQTALTSFFQPS). The Nuclear localization signal signature appears at 470–475 (SKKRPR). Residues 515 to 530 (EETSLGQACGTGQNSS) are compositionally biased toward polar residues. Over residues 549–571 (TAADDLEMSLEELEFLMSDEMDE) the composition is skewed to acidic residues. Residues 586–602 (GLTSKINSEQLSNQQEV) are compositionally biased toward polar residues. Residues 603–612 (TESKGRKGEK) show a composition bias toward basic and acidic residues. A compositionally biased stretch (low complexity) spans 613 to 625 (NQQSSSSNIQSMQ). Composition is skewed to polar residues over residues 633–644 (VTNQDTQTQSKR) and 653–662 (SSANKGPSKN). The span at 663-675 (KTPELEEVKKEEV) shows a compositional bias: basic and acidic residues. Polar residues-rich tracts occupy residues 678-692 (VVNSRPQNGISQTSE) and 699-708 (MQASTSNSGP). Residues 793–808 (EEKLNEREETLGDDLF) are compositionally biased toward basic and acidic residues. Residues 804-813 (GDDLFRYNPR) carry the FxF/Y motif motif.

This sequence belongs to the Nibrin family. As to quaternary structure, component of the MRN complex composed of two heterodimers rad50 and mre11 associated with a single nbn.

It localises to the nucleus. Its subcellular location is the chromosome. The protein resides in the PML body. The protein localises to the telomere. Its function is as follows. Component of the MRN complex, which plays a central role in double-strand break (DSB) repair, DNA recombination, maintenance of telomere integrity and meiosis. The MRN complex is involved in the repair of DNA double-strand breaks (DSBs) via homologous recombination (HR), an error-free mechanism which primarily occurs during S and G2 phases. The complex (1) mediates the end resection of damaged DNA, which generates proper single-stranded DNA, a key initial steps in HR, and is (2) required for the recruitment of other repair factors and efficient activation of ATM and ATR upon DNA damage. The MRN complex possesses single-strand endonuclease activity and double-strand-specific 3'-5' exonuclease activity, which are provided by MRE11, to initiate end resection, which is required for single-strand invasion and recombination. Within the MRN complex, nbn acts as a protein-protein adapter, which specifically recognizes and binds phosphorylated proteins, promoting their recruitment to DNA damage sites. Recruits mre11 and rad50 components of the MRN complex to DSBs in response to DNA damage. Promotes the recruitment of PI3/PI4-kinase family members atm, atr, and probably DNA-PKcs to the DNA damage sites, activating their functions. Mediates the recruitment of phosphorylated rbbp8/CtIP to DSBs, leading to cooperation between the MRN complex and rbbp8/CtIP to initiate end resection. The MRN complex and rbbp8/CtIP are also required for chromosome alignment during metaphase. The polypeptide is Nibrin (nbn) (Danio rerio (Zebrafish)).